The following is a 491-amino-acid chain: Cytochrome P450 2C40 (491 aa).

A signal peptide spans 1–25 (MDPFVVLVLCLSFLLVLSLWRQRSA). Cys435 provides a ligand contact to heme.

This sequence belongs to the cytochrome P450 family. Heme is required as a cofactor. Liver, brain, kidney, and intestine, with trace amounts in lung and heart. Expressed throughout the intestinal tract, with higher expression levels in jejunum, cecum and colon.

The protein resides in the endoplasmic reticulum membrane. It localises to the microsome membrane. It catalyses the reaction (5Z,8Z,11Z,14Z)-eicosatetraenoate + reduced [NADPH--hemoprotein reductase] + O2 = 16(R)-hydroxy-(5Z,8Z,11Z,14Z)-eicosatetraenoate + oxidized [NADPH--hemoprotein reductase] + H2O + H(+). It carries out the reaction (5Z,8Z,11Z,14Z)-eicosatetraenoate + reduced [NADPH--hemoprotein reductase] + O2 = 16(S)-hydroxy-(5Z,8Z,11Z,14Z)-eicosatetraenoate + oxidized [NADPH--hemoprotein reductase] + H2O + H(+). The catalysed reaction is (5Z,8Z,11Z,14Z)-eicosatetraenoate + reduced [NADPH--hemoprotein reductase] + O2 = (14R,15S)-epoxy-(5Z,8Z,11Z)-eicosatrienoate + oxidized [NADPH--hemoprotein reductase] + H2O + H(+). The enzyme catalyses (5Z,8Z,11Z,14Z)-eicosatetraenoate + reduced [NADPH--hemoprotein reductase] + O2 = (14S,15R)-epoxy-(5Z,8Z,11Z)-eicosatrienoate + oxidized [NADPH--hemoprotein reductase] + H2O + H(+). Its pathway is lipid metabolism; arachidonate metabolism. Functionally, a cytochrome P450 monooxygenase that may play a major role in the metabolism of arachidonic acid in the intestinal tract. Exhibits regioselective hydroxylase and epoxidase activity toward arachidonic acid, producing 16(R)-hydroxyeicosatetraenoic acid (HETE) and (14R,15S)-epoxyeicosatrienoic acid (EpETrE) as major products. Mechanistically, uses molecular oxygen inserting one oxygen atom into a substrate, and reducing the second into a water molecule, with two electrons provided by NADPH via cytochrome P450 reductase (CPR; NADPH-ferrihemoprotein reductase). The protein is Cytochrome P450 2C40 of Mus musculus (Mouse).